The following is a 673-amino-acid chain: ATP-binding cassette sub-family G member 8 (673 aa).

A compositionally biased stretch (basic and acidic residues) spans 1 to 11 (MAGKAAEERGL). Residues 1–25 (MAGKAAEERGLPKGATPQDTSGLQD) are disordered. Topologically, residues 1–416 (MAGKAAEERG…ISNDFRDLPT (416 aa)) are cytoplasmic. The ABC transporter domain maps to 47 to 313 (LEVRDLNYQV…FTAIGYPCPR (267 aa)). Residues 411 to 665 (FRDLPTLLIH…VLYYVSLRFI (255 aa)) enclose the ABC transmembrane type-2 domain. A helical membrane pass occupies residues 417 to 437 (LLIHGAEACLMSMTIGFLYFG). Over 438 to 447 (HGSIQLSFMD) the chain is Extracellular. A helical transmembrane segment spans residues 448–468 (TAALLFMIGALIPFNVILDVI). Over 469–497 (SKCYSERAMLYYELEDGLYTTGPYFFAKI) the chain is Cytoplasmic. The chain crosses the membrane as a helical span at residues 498 to 518 (LGELPEHCAYIIIYGMPTYWL). The Extracellular segment spans residues 519-527 (ANLRPGLQP). Residues 528-548 (FLLHFLLVWLVVFCCRIMALA) form a helical membrane-spanning segment. Topologically, residues 549–555 (AAALLPT) are cytoplasmic. The chain crosses the membrane as a helical span at residues 556 to 576 (FHMASFFSNALYNSFYLAGGF). The Extracellular segment spans residues 577-639 (MINLSSLWTV…LSVMELDSYP (63 aa)). N619 carries N-linked (GlcNAc...) asparagine glycosylation. Residues 640–660 (LYAIYLIVIGLSGGFMVLYYV) traverse the membrane as a helical segment. Residues 661–673 (SLRFIKQKPSQDW) lie on the Cytoplasmic side of the membrane.

It belongs to the ABC transporter superfamily. ABCG family. Eye pigment precursor importer (TC 3.A.1.204) subfamily. In terms of assembly, heterodimer with ABCG8. It depends on Mg(2+) as a cofactor. N-glycosylated. In terms of tissue distribution, predominantly expressed in the liver. Low expression levels in the small intestine and colon. Very low levels in other tissues, including brain, heart and spleen.

It localises to the cell membrane. The protein localises to the apical cell membrane. It catalyses the reaction cholesterol(in) + ATP + H2O = cholesterol(out) + ADP + phosphate + H(+). The catalysed reaction is sitosterol(in) + ATP + H2O = sitosterol(out) + ADP + phosphate + H(+). With respect to regulation, the ATPase activity of the heterodimer is stimulated by cholate. Taurocholate, glycocholate, taurochenodeoxycholate, glycochenodeoxycholate and taurodeoxycholate also stimulate ATPase activity, but to a lower degree. Glycodeoxycholate has no significant effect on ATPase activity. ATPase activity is inhibited by vanadate and by berillium fluoride. In terms of biological role, ABCG5 and ABCG8 form an obligate heterodimer that mediates Mg(2+)- and ATP-dependent sterol transport across the cell membrane. Plays an essential role in the selective transport of the dietary cholesterol in and out of the enterocytes and in the selective sterol excretion by the liver into bile. Required for normal sterol homeostasis. The heterodimer with ABCG5 has ATPase activity. This Homo sapiens (Human) protein is ATP-binding cassette sub-family G member 8.